The chain runs to 504 residues: U3 snoRNP-associated protein-like YAO (504 aa).

The tract at residues 1-120 is disordered; it reads MKYNNEKKKG…DDDDDEDDDE (120 aa). Residues 20 to 33 show a composition bias toward basic and acidic residues; it reads GSNERDPFFEEEPK. Acidic residues-rich tracts occupy residues 41 to 54 and 70 to 81; these read DDDDIESVDSDAEE and EVEDEDEFADET. Residues 89–106 show a composition bias toward basic and acidic residues; it reads LAEEMLNRRREAMRRERE. Positions 107 to 120 are enriched in acidic residues; that stretch reads EADNDDDDDEDDDE. 7 WD repeats span residues 159–198, 220–259, 262–301, 304–342, 344–382, 413–452, and 456–496; these read KHRRSVVSVALSDDDSRGFSASKDGTIMHWDVSSGKTDKY, NHSRESLALAVSSDGRYLATGGVDRHVHIWDVRTREHVQA, GHRNTVSCLCFRYGTSELYSGSFDRTVKVWNVEDKAFITE, GHQGEILAIDALRKERALTVGRDRTMLYHKVPESTRMIY, APASSLESCCFISDNEYLSGSDNGTVALWGMLKKKPVFV, SANSWVNAVATSRGSDLAASGAGNGFVRLWAVETNAIRPL, and PLTG…QNGV.

This sequence belongs to the WD repeat RRP9 family. In terms of tissue distribution, expressed in tissues with active in cell division such as shoot apexes, root tips, lateral root primordia, embryos, endosperm, pollen grains and embryo sacs.

Its subcellular location is the nucleus. It localises to the nucleolus. In terms of biological role, component of a nucleolar small nuclear ribonucleoprotein particle (snoRNP) thought to participate in the processing and modification of pre-ribosomal RNA. Essential for embryogenesis. Plays a critical role in embryo sac development and gametic cell fate. Required for the correct positioning of the first division plane of zygote. May function during early embryogenesis. The polypeptide is U3 snoRNP-associated protein-like YAO (Arabidopsis thaliana (Mouse-ear cress)).